The chain runs to 386 residues: G2/mitotic-specific cyclin-B2 (386 aa).

A disordered region spans residues 45–64 (TNGKVGPSKKPSKASCAQKP).

This sequence belongs to the cyclin family. Cyclin AB subfamily. In terms of assembly, interacts with the CDK1 protein kinase to form a serine/threonine kinase holoenzyme complex also known as maturation promoting factor (MPF). The cyclin subunit imparts substrate specificity to the complex.

In terms of biological role, essential for the control of the cell cycle at the G2/M (mitosis) transition. The sequence is that of G2/mitotic-specific cyclin-B2 (ccnb2) from Oryzias luzonensis (Luzon ricefish).